The primary structure comprises 331 residues: Tyrosine recombinase XerD (331 aa).

The Core-binding (CB) domain maps to 8-93 (GRDGARLESF…SMRQFYRFLY (86 aa)). The 205-residue stretch at 114 to 318 (ALPKTMSVAD…LEERLQELVQ (205 aa)) folds into the Tyr recombinase domain. Residues Arg-161 and Lys-185 contribute to the active site. Over residues 214–228 (QEKSKAAASQKKTDT) the composition is skewed to basic and acidic residues. The interval 214-239 (QEKSKAAASQKKTDTAESPWLFPSNS) is disordered. Residues His-270, Arg-273, and His-296 contribute to the active site. The active-site O-(3'-phospho-DNA)-tyrosine intermediate is the Tyr-305.

It belongs to the 'phage' integrase family. XerD subfamily. As to quaternary structure, forms a cyclic heterotetrameric complex composed of two molecules of XerC and two molecules of XerD.

Its subcellular location is the cytoplasm. Site-specific tyrosine recombinase, which acts by catalyzing the cutting and rejoining of the recombining DNA molecules. The XerC-XerD complex is essential to convert dimers of the bacterial chromosome into monomers to permit their segregation at cell division. It also contributes to the segregational stability of plasmids. This Agrobacterium fabrum (strain C58 / ATCC 33970) (Agrobacterium tumefaciens (strain C58)) protein is Tyrosine recombinase XerD.